The primary structure comprises 131 residues: Translation initiation factor 5A (131 aa).

A Hypusine modification is found at Lys37.

Belongs to the eIF-5A family.

The protein resides in the cytoplasm. In terms of biological role, functions by promoting the formation of the first peptide bond. The sequence is that of Translation initiation factor 5A (eIF5A) from Methanococcus vannielii (strain ATCC 35089 / DSM 1224 / JCM 13029 / OCM 148 / SB).